Consider the following 377-residue polypeptide: Succinyl-diaminopimelate desuccinylase (377 aa).

His68 is a binding site for Zn(2+). Residue Asp70 is part of the active site. Residue Asp101 coordinates Zn(2+). Glu135 (proton acceptor) is an active-site residue. Zn(2+) is bound by residues Glu136, Glu164, and His350.

This sequence belongs to the peptidase M20A family. DapE subfamily. Homodimer. Zn(2+) serves as cofactor. The cofactor is Co(2+).

The catalysed reaction is N-succinyl-(2S,6S)-2,6-diaminopimelate + H2O = (2S,6S)-2,6-diaminopimelate + succinate. It functions in the pathway amino-acid biosynthesis; L-lysine biosynthesis via DAP pathway; LL-2,6-diaminopimelate from (S)-tetrahydrodipicolinate (succinylase route): step 3/3. Its function is as follows. Catalyzes the hydrolysis of N-succinyl-L,L-diaminopimelic acid (SDAP), forming succinate and LL-2,6-diaminopimelate (DAP), an intermediate involved in the bacterial biosynthesis of lysine and meso-diaminopimelic acid, an essential component of bacterial cell walls. The sequence is that of Succinyl-diaminopimelate desuccinylase from Vibrio vulnificus (strain CMCP6).